The sequence spans 91 residues: Cell division protein ZapA (91 aa).

Residues 59-86 (TAVNIANEYLKLKEEYDRLAAKLRREKG) adopt a coiled-coil conformation.

It belongs to the ZapA family. Type 2 subfamily. As to quaternary structure, homodimer. Interacts with FtsZ.

Its subcellular location is the cytoplasm. Functionally, activator of cell division through the inhibition of FtsZ GTPase activity, therefore promoting FtsZ assembly into bundles of protofilaments necessary for the formation of the division Z ring. It is recruited early at mid-cell but it is not essential for cell division. The sequence is that of Cell division protein ZapA from Geobacillus thermodenitrificans (strain NG80-2).